The following is a 352-amino-acid chain: 4-hydroxy-2-oxovalerate aldolase (352 aa).

Positions 14 to 266 (VRMTDTSLRD…KTGIDFFDIA (253 aa)) constitute a Pyruvate carboxyltransferase domain. Position 22–23 (22–23 (RD)) interacts with substrate. Aspartate 23 is a Mn(2+) binding site. The active-site Proton acceptor is the histidine 26. Serine 176 and histidine 205 together coordinate substrate. Residues histidine 205 and histidine 207 each contribute to the Mn(2+) site. Tyrosine 296 lines the substrate pocket.

Belongs to the 4-hydroxy-2-oxovalerate aldolase family.

The enzyme catalyses (S)-4-hydroxy-2-oxopentanoate = acetaldehyde + pyruvate. This chain is 4-hydroxy-2-oxovalerate aldolase, found in Mycolicibacterium gilvum (strain PYR-GCK) (Mycobacterium gilvum (strain PYR-GCK)).